A 167-amino-acid polypeptide reads, in one-letter code: Mediator of RNA polymerase II transcription subunit 10 (167 aa).

The tract at residues 53–88 is disordered; it reads LSTHTKPQPPSQDEEQKEKQDDTPEGSANDPLLRDI.

Belongs to the Mediator complex subunit 10 family. Component of the Mediator complex.

It localises to the nucleus. Its function is as follows. Component of the Mediator complex, a coactivator involved in the regulated transcription of nearly all RNA polymerase II-dependent genes. Mediator functions as a bridge to convey information from gene-specific regulatory proteins to the basal RNA polymerase II transcription machinery. Mediator is recruited to promoters by direct interactions with regulatory proteins and serves as a scaffold for the assembly of a functional preinitiation complex with RNA polymerase II and the general transcription factors. The sequence is that of Mediator of RNA polymerase II transcription subunit 10 (nut2) from Neosartorya fischeri (strain ATCC 1020 / DSM 3700 / CBS 544.65 / FGSC A1164 / JCM 1740 / NRRL 181 / WB 181) (Aspergillus fischerianus).